Here is a 302-residue protein sequence, read N- to C-terminus: Pyridoxal 5'-phosphate synthase subunit PdxS (302 aa).

Position 32 (aspartate 32) interacts with D-ribose 5-phosphate. Lysine 89 (schiff-base intermediate with D-ribose 5-phosphate) is an active-site residue. Glycine 161 provides a ligand contact to D-ribose 5-phosphate. Arginine 173 lines the D-glyceraldehyde 3-phosphate pocket. Residues glycine 222 and 243-244 (GS) each bind D-ribose 5-phosphate. The disordered stretch occupies residues 278–302 (GIGKGMKGQSNEDLPDEEKLQGRGV).

It belongs to the PdxS/SNZ family. As to quaternary structure, in the presence of PdxT, forms a dodecamer of heterodimers.

The catalysed reaction is aldehydo-D-ribose 5-phosphate + D-glyceraldehyde 3-phosphate + L-glutamine = pyridoxal 5'-phosphate + L-glutamate + phosphate + 3 H2O + H(+). It participates in cofactor biosynthesis; pyridoxal 5'-phosphate biosynthesis. Catalyzes the formation of pyridoxal 5'-phosphate from ribose 5-phosphate (RBP), glyceraldehyde 3-phosphate (G3P) and ammonia. The ammonia is provided by the PdxT subunit. Can also use ribulose 5-phosphate and dihydroxyacetone phosphate as substrates, resulting from enzyme-catalyzed isomerization of RBP and G3P, respectively. In Halorubrum lacusprofundi (strain ATCC 49239 / DSM 5036 / JCM 8891 / ACAM 34), this protein is Pyridoxal 5'-phosphate synthase subunit PdxS.